We begin with the raw amino-acid sequence, 142 residues long: MFQGASALTLDAKGRMSVPSRYREALQGQAEGRVTVTKHPDGCLLLFPRPEWEVFRAKIAALPMDAHWWRRIFLGNAMDVDLDSAGRILVSPELRMAAGLEKEVMLLGMGSHFELWDSQTYNAKEQAAMAQGMPDALKNFTF.

2 SpoVT-AbrB domains span residues 5 to 51 (ASAL…PRPE) and 77 to 120 (AMDV…DSQT).

It belongs to the MraZ family. As to quaternary structure, forms oligomers.

The protein resides in the cytoplasm. It is found in the nucleoid. This is Transcriptional regulator MraZ from Burkholderia cenocepacia (strain HI2424).